The chain runs to 114 residues: Small ribosomal subunit protein bS16 (114 aa).

Belongs to the bacterial ribosomal protein bS16 family.

This is Small ribosomal subunit protein bS16 from Prochlorococcus marinus subsp. pastoris (strain CCMP1986 / NIES-2087 / MED4).